The following is a 440-amino-acid chain: Putative sodium-coupled neutral amino acid transporter 8 (440 aa).

A run of 11 helical transmembrane segments spans residues 29-49 (AIFI…PWAF), 58-78 (AIMV…ILGY), 100-120 (IGKL…VAFL), 156-176 (FAIT…KEIS), 183-203 (ILGT…YYVM), 223-243 (MFSV…CVTI), 255-275 (WAAV…FTGI), 300-320 (VIIA…IILL), 350-370 (VVIT…VPDI), 373-393 (VISV…GLCL), and 418-438 (VVCG…EIIA).

It belongs to the amino acid/polyamine transporter 2 family.

The protein localises to the membrane. Putative sodium-dependent amino acid/proton antiporter. In Xenopus tropicalis (Western clawed frog), this protein is Putative sodium-coupled neutral amino acid transporter 8 (slc38a8).